Here is a 472-residue protein sequence, read N- to C-terminus: Ribosomal protein uS12 methylthiotransferase RimO (472 aa).

Residues 22 to 133 enclose the MTTase N-terminal domain; that stretch reads PSVAFAHLGC…IVDVLKRVEA (112 aa). The [4Fe-4S] cluster site is built by cysteine 31, cysteine 67, cysteine 96, cysteine 171, cysteine 175, and cysteine 178. One can recognise a Radical SAM core domain in the interval 157–386; it reads TTDQAVAYLK…MALQQPISAE (230 aa). One can recognise a TRAM domain in the interval 389–460; it reads QRWVGRTIDV…VYDLTGQLVD (72 aa).

It belongs to the methylthiotransferase family. RimO subfamily. [4Fe-4S] cluster is required as a cofactor.

The protein resides in the cytoplasm. The enzyme catalyses L-aspartate(89)-[ribosomal protein uS12]-hydrogen + (sulfur carrier)-SH + AH2 + 2 S-adenosyl-L-methionine = 3-methylsulfanyl-L-aspartate(89)-[ribosomal protein uS12]-hydrogen + (sulfur carrier)-H + 5'-deoxyadenosine + L-methionine + A + S-adenosyl-L-homocysteine + 2 H(+). Functionally, catalyzes the methylthiolation of an aspartic acid residue of ribosomal protein uS12. This Prochlorococcus marinus (strain MIT 9303) protein is Ribosomal protein uS12 methylthiotransferase RimO.